Reading from the N-terminus, the 498-residue chain is Excisase C (498 aa).

A Tyr recombinase domain is found at 263-446 (KIIYSFDLFE…FGIENRKKAF (184 aa)). Catalysis depends on residues Arg306, Lys336, Arg401, and His424. Tyr433 acts as the O-(3'-phospho-DNA)-tyrosine intermediate in catalysis.

This sequence belongs to the XisA/XisC recombinase family.

Essential for DNA excision. Site specific recombinase necessary for the excision of the 10.5 kb hupL element during heterocyst differentiation. This Nostoc sp. (strain PCC 7120 / SAG 25.82 / UTEX 2576) protein is Excisase C (xisC).